A 282-amino-acid chain; its full sequence is tRNA pseudouridine synthase B (282 aa).

Asp39 serves as the catalytic Nucleophile.

This sequence belongs to the pseudouridine synthase TruB family. Type 1 subfamily.

It carries out the reaction uridine(55) in tRNA = pseudouridine(55) in tRNA. Responsible for synthesis of pseudouridine from uracil-55 in the psi GC loop of transfer RNAs. This Borrelia garinii subsp. bavariensis (strain ATCC BAA-2496 / DSM 23469 / PBi) (Borreliella bavariensis) protein is tRNA pseudouridine synthase B.